A 431-amino-acid chain; its full sequence is Adenylosuccinate synthetase (431 aa).

GTP-binding positions include 13–19 (GDEGKGK) and 41–43 (GHT). The Proton acceptor role is filled by D14. Residues D14 and G41 each contribute to the Mg(2+) site. IMP contacts are provided by residues 14-17 (DEGK), 39-42 (NAGH), T130, R144, Q225, T240, and R304. The Proton donor role is filled by H42. Residue 300 to 306 (ATTGRKR) participates in substrate binding. Residues R306, 332-334 (KLD), and 415-417 (STG) contribute to the GTP site.

This sequence belongs to the adenylosuccinate synthetase family. Homodimer. Mg(2+) serves as cofactor.

The protein localises to the cytoplasm. The catalysed reaction is IMP + L-aspartate + GTP = N(6)-(1,2-dicarboxyethyl)-AMP + GDP + phosphate + 2 H(+). It participates in purine metabolism; AMP biosynthesis via de novo pathway; AMP from IMP: step 1/2. Plays an important role in the de novo pathway of purine nucleotide biosynthesis. Catalyzes the first committed step in the biosynthesis of AMP from IMP. The polypeptide is Adenylosuccinate synthetase (Shewanella woodyi (strain ATCC 51908 / MS32)).